Here is a 114-residue protein sequence, read N- to C-terminus: Small ribosomal subunit protein uS14m (114 aa).

This sequence belongs to the universal ribosomal protein uS14 family.

Its subcellular location is the mitochondrion. This is Small ribosomal subunit protein uS14m (MRP2) from Eremothecium gossypii (strain ATCC 10895 / CBS 109.51 / FGSC 9923 / NRRL Y-1056) (Yeast).